The sequence spans 474 residues: 3-isopropylmalate dehydratase large subunit (474 aa).

[4Fe-4S] cluster contacts are provided by cysteine 355, cysteine 415, and cysteine 418.

It belongs to the aconitase/IPM isomerase family. LeuC type 1 subfamily. In terms of assembly, heterodimer of LeuC and LeuD. The cofactor is [4Fe-4S] cluster.

It catalyses the reaction (2R,3S)-3-isopropylmalate = (2S)-2-isopropylmalate. It functions in the pathway amino-acid biosynthesis; L-leucine biosynthesis; L-leucine from 3-methyl-2-oxobutanoate: step 2/4. Functionally, catalyzes the isomerization between 2-isopropylmalate and 3-isopropylmalate, via the formation of 2-isopropylmaleate. The protein is 3-isopropylmalate dehydratase large subunit of Shewanella sp. (strain ANA-3).